A 159-amino-acid polypeptide reads, in one-letter code: Ribosomal RNA large subunit methyltransferase H (159 aa).

S-adenosyl-L-methionine-binding positions include Leu76, Gly108, and 127-132 (FGLLTL).

The protein belongs to the RNA methyltransferase RlmH family. In terms of assembly, homodimer.

The protein localises to the cytoplasm. It carries out the reaction pseudouridine(1915) in 23S rRNA + S-adenosyl-L-methionine = N(3)-methylpseudouridine(1915) in 23S rRNA + S-adenosyl-L-homocysteine + H(+). Functionally, specifically methylates the pseudouridine at position 1915 (m3Psi1915) in 23S rRNA. In Streptococcus pyogenes serotype M5 (strain Manfredo), this protein is Ribosomal RNA large subunit methyltransferase H.